A 269-amino-acid chain; its full sequence is Tryptophan synthase alpha chain (269 aa).

Catalysis depends on proton acceptor residues Glu49 and Asp60.

This sequence belongs to the TrpA family. Tetramer of two alpha and two beta chains.

The catalysed reaction is (1S,2R)-1-C-(indol-3-yl)glycerol 3-phosphate + L-serine = D-glyceraldehyde 3-phosphate + L-tryptophan + H2O. Its pathway is amino-acid biosynthesis; L-tryptophan biosynthesis; L-tryptophan from chorismate: step 5/5. Functionally, the alpha subunit is responsible for the aldol cleavage of indoleglycerol phosphate to indole and glyceraldehyde 3-phosphate. This is Tryptophan synthase alpha chain from Paramagnetospirillum magneticum (strain ATCC 700264 / AMB-1) (Magnetospirillum magneticum).